A 278-amino-acid chain; its full sequence is Probable endonuclease 4 (278 aa).

Zn(2+) is bound by residues histidine 70, histidine 108, glutamate 143, aspartate 176, histidine 179, histidine 210, aspartate 223, histidine 225, and glutamate 255.

It belongs to the AP endonuclease 2 family. Requires Zn(2+) as cofactor.

It catalyses the reaction Endonucleolytic cleavage to 5'-phosphooligonucleotide end-products.. In terms of biological role, endonuclease IV plays a role in DNA repair. It cleaves phosphodiester bonds at apurinic or apyrimidinic (AP) sites, generating a 3'-hydroxyl group and a 5'-terminal sugar phosphate. The polypeptide is Probable endonuclease 4 (Mycoplasmopsis agalactiae (strain NCTC 10123 / CIP 59.7 / PG2) (Mycoplasma agalactiae)).